A 105-amino-acid polypeptide reads, in one-letter code: ATP synthase subunit c (105 aa).

Helical transmembrane passes span 3 to 23 (FLAL…GGMD), 32 to 52 (SILG…IGMG), and 78 to 98 (VAMA…IIAI).

Belongs to the ATPase C chain family. F-type ATPases have 2 components, F(1) - the catalytic core - and F(0) - the membrane proton channel. F(1) has five subunits: alpha(3), beta(3), gamma(1), delta(1), epsilon(1). F(0) has three main subunits: a(1), b(2) and c(10-14). The alpha and beta chains form an alternating ring which encloses part of the gamma chain. F(1) is attached to F(0) by a central stalk formed by the gamma and epsilon chains, while a peripheral stalk is formed by the delta and b chains.

It localises to the cell inner membrane. F(1)F(0) ATP synthase produces ATP from ADP in the presence of a proton or sodium gradient. F-type ATPases consist of two structural domains, F(1) containing the extramembraneous catalytic core and F(0) containing the membrane proton channel, linked together by a central stalk and a peripheral stalk. During catalysis, ATP synthesis in the catalytic domain of F(1) is coupled via a rotary mechanism of the central stalk subunits to proton translocation. Functionally, key component of the F(0) channel; it plays a direct role in translocation across the membrane. A homomeric c-ring of between 10-14 subunits forms the central stalk rotor element with the F(1) delta and epsilon subunits. The polypeptide is ATP synthase subunit c (Helicobacter acinonychis (strain Sheeba)).